Here is a 542-residue protein sequence, read N- to C-terminus: Putative DEAD-box ATP-dependent RNA helicase 43 (542 aa).

The Q motif signature appears at 97-125; sequence KNFMDMKFPSPLLRMLKDKGIMHPTPIQV. Residues 128–312 form the Helicase ATP-binding domain; sequence LPVVLSGRDM…TSALVKPVTV (185 aa). 141–148 contributes to the ATP binding site; it reads AFTGSGKT. The DEAD box signature appears at 260–263; the sequence is DEAD. Positions 323–483 constitute a Helicase C-terminal domain; the sequence is DVIQEVEYVK…RIPPVLAELN (161 aa). The segment at 499–516 adopts a CCHC-type zinc-finger fold; sequence KGCAYCGGLGHRILQCPK.

Belongs to the DEAD box helicase family. DDX41 subfamily.

The catalysed reaction is ATP + H2O = ADP + phosphate + H(+). In Arabidopsis thaliana (Mouse-ear cress), this protein is Putative DEAD-box ATP-dependent RNA helicase 43 (RH43).